The chain runs to 475 residues: Glycogen synthase (475 aa).

ADP-alpha-D-glucose is bound at residue K15.

This sequence belongs to the glycosyltransferase 1 family. Bacterial/plant glycogen synthase subfamily.

The catalysed reaction is [(1-&gt;4)-alpha-D-glucosyl](n) + ADP-alpha-D-glucose = [(1-&gt;4)-alpha-D-glucosyl](n+1) + ADP + H(+). It participates in glycan biosynthesis; glycogen biosynthesis. In terms of biological role, synthesizes alpha-1,4-glucan chains using ADP-glucose. The protein is Glycogen synthase of Alkaliphilus metalliredigens (strain QYMF).